We begin with the raw amino-acid sequence, 312 residues long: Olfactory receptor 4F3/4F16/4F29 (312 aa).

Residues Met-1 to Leu-25 lie on the Extracellular side of the membrane. N-linked (GlcNAc...) asparagine glycosylation is present at Asn-5. A helical transmembrane segment spans residues Leu-26–Val-49. Residues Thr-50 to Ser-57 lie on the Cytoplasmic side of the membrane. Residues Pro-58–Pro-79 form a helical membrane-spanning segment. The Extracellular portion of the chain corresponds to Lys-80–Gln-100. A disulfide bridge connects residues Cys-97 and Cys-189. Residues Ile-101 to Phe-120 form a helical membrane-spanning segment. Residues Asp-121 to Arg-139 are Cytoplasmic-facing. A helical membrane pass occupies residues Met-140–Phe-158. Residues Gln-159–Leu-195 lie on the Extracellular side of the membrane. A helical transmembrane segment spans residues Gln-196–Val-219. Residues Phe-220–Lys-235 are Cytoplasmic-facing. A helical membrane pass occupies residues Ala-236–Tyr-258. Over Thr-259–Lys-269 the chain is Extracellular. A helical transmembrane segment spans residues Phe-270–Phe-289. The Cytoplasmic segment spans residues Arg-290 to Ser-312.

This sequence belongs to the G-protein coupled receptor 1 family.

The protein resides in the cell membrane. In terms of biological role, odorant receptor. This chain is Olfactory receptor 4F3/4F16/4F29 (OR4F3), found in Homo sapiens (Human).